Reading from the N-terminus, the 224-residue chain is Rhodanese-like domain-containing protein 14, chloroplastic (224 aa).

The N-terminal 48 residues, 1–48 (MASLTSIATPYPSSSQALRLKSSGNTLFSAGVRSAAMVSGHKTLKIQC), are a transit peptide targeting the chloroplast. The 134-residue stretch at 87–220 (KENNFVILDV…WGKEGLPVET (134 aa)) folds into the Rhodanese domain. C166 serves as the catalytic Cysteine persulfide intermediate.

The protein resides in the plastid. It localises to the chloroplast. This chain is Rhodanese-like domain-containing protein 14, chloroplastic, found in Arabidopsis thaliana (Mouse-ear cress).